Here is a 251-residue protein sequence, read N- to C-terminus: MELSAIGEQVFAVESIRKKRVRKGKVEYLVKWKGWPPKYSTWEPEEHILDPRLVMAYEEKEERDRASGYRKRGPKPKRLLLQRLYSMDLRSSHKAKGKEKLCFSLTCPLGSGSPEGVVKAGAPELVDKGPLVPTLPFPLRKPRKAHKYLRLSRKKFPPRGPNLESHSHRRELFLQEPPAPDVLQAAGEWEPAAQPPEEEADADLAEGPPPWTPALPSSEVTVTDITANSITVTFREAQAAEGFFRDRSGKF.

The 59-residue stretch at 11–69 (FAVESIRKKRVRKGKVEYLVKWKGWPPKYSTWEPEEHILDPRLVMAYEEKEERDRASGY) folds into the Chromo domain. The tract at residues 190 to 220 (EPAAQPPEEEADADLAEGPPPWTPALPSSEV) is disordered. The interval 223–236 (TDITANSITVTFRE) is required for cellular lifespan extension.

Component of a PRC1-like complex. Interacts with RING1 and RNF2/RING1B, but not with BMI1, EED or EZH2. Interacts with PCGF1, PCGF2, PCGF3, PCGF5 and PCGF6.

The protein localises to the nucleus. Component of a Polycomb group (PcG) multiprotein PRC1-like complex, a complex class required to maintain the transcriptionally repressive state of many genes, including Hox genes, throughout development. PcG PRC1 complex acts via chromatin remodeling and modification of histones; it mediates monoubiquitination of histone H2A 'Lys-119', rendering chromatin heritably changed in its expressibility. Promotes histone H3 trimethylation at 'Lys-9' (H3K9me3). Binds to trimethylated lysine residues in histones, and possibly also other proteins. Regulator of cellular lifespan by maintaining the repression of CDKN2A, but not by inducing telomerase activity. The protein is Chromobox protein homolog 7 (CBX7) of Homo sapiens (Human).